The primary structure comprises 204 residues: ATP phosphoribosyltransferase (204 aa).

This sequence belongs to the ATP phosphoribosyltransferase family. Short subfamily. Heteromultimer composed of HisG and HisZ subunits.

Its subcellular location is the cytoplasm. The enzyme catalyses 1-(5-phospho-beta-D-ribosyl)-ATP + diphosphate = 5-phospho-alpha-D-ribose 1-diphosphate + ATP. Its pathway is amino-acid biosynthesis; L-histidine biosynthesis; L-histidine from 5-phospho-alpha-D-ribose 1-diphosphate: step 1/9. Catalyzes the condensation of ATP and 5-phosphoribose 1-diphosphate to form N'-(5'-phosphoribosyl)-ATP (PR-ATP). Has a crucial role in the pathway because the rate of histidine biosynthesis seems to be controlled primarily by regulation of HisG enzymatic activity. The protein is ATP phosphoribosyltransferase of Hydrogenobaculum sp. (strain Y04AAS1).